The primary structure comprises 440 residues: Coenzyme A disulfide reductase (440 aa).

FAD is bound at residue Gly8–Glu33. Residues Thr15, Gln19, Arg22, Ser39, and Asn42 each contribute to the substrate site. The active-site Nucleophile is the Cys43. The Redox-active role is filled by Cys43. Residue Lys71 participates in substrate binding. Position 151–166 (Ala151–Asn166) interacts with NADP(+). An FAD-binding site is contributed by Thr267 to Asp277. His299 contributes to the substrate binding site. Tyr419 serves as a coordination point for FAD. Lys427 contributes to the substrate binding site.

The protein belongs to the class-III pyridine nucleotide-disulfide oxidoreductase family. Homodimer. FAD serves as cofactor.

It carries out the reaction NADP(+) + 2 CoA = CoA-disulfide + NADPH + H(+). Functionally, catalyzes specifically the NADPH-dependent reduction of coenzyme A disulfide. This chain is Coenzyme A disulfide reductase, found in Staphylococcus haemolyticus (strain JCSC1435).